Reading from the N-terminus, the 335-residue chain is 2-acylglycerol O-acyltransferase 1 (335 aa).

A run of 2 helical transmembrane segments spans residues 24 to 44 (WLLSFLLFAQVCLGIIVFLII) and 104 to 124 (YIFGFHPHGVLVVGAFGNFCT). Asn125 and Asn180 each carry an N-linked (GlcNAc...) asparagine glycan.

Belongs to the diacylglycerol acyltransferase family.

Its subcellular location is the endoplasmic reticulum membrane. The catalysed reaction is a 2-acylglycerol + an acyl-CoA = a 1,2-diacylglycerol + CoA. It carries out the reaction 2-(9Z-octadecenoyl)-glycerol + butanoyl-CoA = 1-butanoyl-2-(9Z-octadecenoyl)-glycerol + CoA. It catalyses the reaction 2-(9Z-octadecenoyl)-glycerol + octanoyl-CoA = 1-octanoyl-2-(9Z-octadecenoyl)-glycerol + CoA. The enzyme catalyses 2-(9Z-octadecenoyl)-glycerol + dodecanoyl-CoA = 1-dodecanoyl-2-(9Z-octadecenoyl)-glycerol + CoA. The catalysed reaction is 2-(9Z-octadecenoyl)-glycerol + tetradecanoyl-CoA = 1-tetradecanoyl-2-(9Z-octadecenoyl)-glycerol + CoA. It carries out the reaction 2-(9Z-octadecenoyl)-glycerol + hexadecanoyl-CoA = 1-hexadecanoyl-2-(9Z-octadecenoyl)-glycerol + CoA. It catalyses the reaction 2-(9Z-octadecenoyl)-glycerol + octadecanoyl-CoA = 1-octadecanoyl-2-(9Z-octadecenoyl)-glycerol + CoA. The enzyme catalyses eicosanoyl-CoA + 2-(9Z-octadecenoyl)-glycerol = 1-eicosanoyl-2-(9Z-octadecenoyl)-glycerol + CoA. The catalysed reaction is 2-(9Z-octadecenoyl)-glycerol + (9Z)-octadecenoyl-CoA = 1,2-di-(9Z-octadecenoyl)-glycerol + CoA. It carries out the reaction 2-(9Z-octadecenoyl)-glycerol + (9Z,12Z)-octadecadienoyl-CoA = 1-(9Z,12Z-octadecadienoyl)-2-(9Z-octadecenoyl)-glycerol + CoA. It catalyses the reaction 2-(9Z-octadecenoyl)-glycerol + (5Z,8Z,11Z,14Z)-eicosatetraenoyl-CoA = 1-(5Z,8Z,11Z,14Z-eicosatetraenoyl)-2-(9Z-octadecenoyl)-glycerol + CoA. The enzyme catalyses a 2-acylglycerol + an acyl-CoA = a 1,2-diacyl-sn-glycerol + CoA. The catalysed reaction is a 2-acylglycerol + an acyl-CoA = a 2,3-diacyl-sn-glycerol + CoA. It carries out the reaction a 1-acylglycerol + an acyl-CoA = a 1,2-diacylglycerol + CoA. It catalyses the reaction 1-dodecanoylglycerol + (9Z)-octadecenoyl-CoA = 1-dodecanoyl-2-(9Z-octadecenoyl)-glycerol + CoA. The enzyme catalyses 1-tetradecanoylglycerol + (9Z)-octadecenoyl-CoA = 1-tetradecanoyl-2-(9Z-octadecenoyl)-glycerol + CoA. The catalysed reaction is 1-hexadecanoylglycerol + (9Z)-octadecenoyl-CoA = 1-hexadecanoyl-2-(9Z-octadecenoyl)-glycerol + CoA. It carries out the reaction 1-(9Z-octadecenoyl)-glycerol + (9Z)-octadecenoyl-CoA = 1,2-di-(9Z-octadecenoyl)-glycerol + CoA. It catalyses the reaction 1-(9Z,12Z-octadecadienoyl)-glycerol + (9Z)-octadecenoyl-CoA = 1-(9Z,12Z-octadecadienoyl)-2-(9Z-octadecenoyl)-glycerol + CoA. The enzyme catalyses 1-(9Z,12Z,15Z-octadecatrienoyl)-glycerol + (9Z)-octadecenoyl-CoA = 1-(9Z,12Z,15Z-octadecatrienoyl)-2-(9Z-octadecenoyl)-glycerol + CoA. The catalysed reaction is 1-(5Z,8Z,11Z,14Z-eicosatetraenoyl)-glycerol + (9Z)-octadecenoyl-CoA = 1-(5Z,8Z,11Z,14Z-eicosatetraenoyl)-2-(9Z-octadecenoyl)-glycerol + CoA. It carries out the reaction a 1-acylglycerol + an acyl-CoA = a 1,3-diacylglycerol + CoA. It catalyses the reaction 1-dodecanoylglycerol + (9Z)-octadecenoyl-CoA = 1-dodecanoyl-3-(9Z-octadecenoyl)-glycerol + CoA. The enzyme catalyses 1-hexadecanoylglycerol + (9Z)-octadecenoyl-CoA = 1-(9Z-octadecenoyl)-3-hexadecanoylglycerol + CoA. The catalysed reaction is 1-octadecanoylglycerol + (9Z)-octadecenoyl-CoA = 1-octadecanoyl-3-(9Z-octadecenoyl)-glycerol + CoA. It carries out the reaction 1-(9Z-octadecenoyl)-sn-glycerol + (9Z)-octadecenoyl-CoA = 1,3-di-(9Z-octadecenoyl)-glycerol + CoA. It catalyses the reaction 1-(9Z,12Z-octadecadienoyl)-glycerol + (9Z)-octadecenoyl-CoA = 1-(9Z-octadecenoyl)-3-(9Z,12Z-octadecadienoyl)-glycerol + CoA. The enzyme catalyses 1-(9Z,12Z,15Z-octadecatrienoyl)-glycerol + (9Z)-octadecenoyl-CoA = 1-(9Z,12Z,15Z-octadecatrienoyl)-3-(9Z-octadecenoyl)-glycerol + CoA. The catalysed reaction is a 1-acyl-sn-glycerol + an acyl-CoA = a 1,3-diacyl-sn-glycerol + CoA. It carries out the reaction a 3-acyl-sn-glycerol + an acyl-CoA = a 1,3-diacyl-sn-glycerol + CoA. It catalyses the reaction 3-octadecanoyl-sn-glycerol + (9Z)-octadecenoyl-CoA = 1-(9Z-octadecenoyl)-3-octadecanoyl-sn-glycerol + CoA. The protein operates within glycerolipid metabolism; triacylglycerol biosynthesis. Its function is as follows. Involved in glycerolipid synthesis and lipid metabolism. Catalyzes the formation of diacylglycerol, the precursor of triacylglycerol, by transferring the acyl chain of a fatty acyl-CoA to a monoacylglycerol, mainly at the sn-1 or sn-3 positions. It uses both sn-2-monoacylglycerol (2-acylglycerol) and sn-1-monoacylglycerol (1-acyl-sn-glycerol) equally well as substrates, and uses sn-3-monoacylglycerol (3-acyl-sn-glycerol) with lower efficiency. Probably not involved in absorption of dietary fat in the small intestine. In Bos taurus (Bovine), this protein is 2-acylglycerol O-acyltransferase 1 (MOGAT1).